Reading from the N-terminus, the 244-residue chain is DNA repair protein RecO (244 aa).

The protein belongs to the RecO family.

Functionally, involved in DNA repair and RecF pathway recombination. This Polynucleobacter asymbioticus (strain DSM 18221 / CIP 109841 / QLW-P1DMWA-1) (Polynucleobacter necessarius subsp. asymbioticus) protein is DNA repair protein RecO.